A 321-amino-acid polypeptide reads, in one-letter code: Putative ribose-phosphate pyrophosphokinase 2 (321 aa).

ATP contacts are provided by residues 43–45 (DGE) and 102–103 (RQ). Residues His-136 and Asp-176 each coordinate Mg(2+). Asp-225 contributes to the D-ribose 5-phosphate binding site.

Belongs to the ribose-phosphate pyrophosphokinase family. Class I subfamily. In terms of assembly, homohexamer. It depends on Mg(2+) as a cofactor.

Its subcellular location is the cytoplasm. The enzyme catalyses D-ribose 5-phosphate + ATP = 5-phospho-alpha-D-ribose 1-diphosphate + AMP + H(+). Its pathway is metabolic intermediate biosynthesis; 5-phospho-alpha-D-ribose 1-diphosphate biosynthesis; 5-phospho-alpha-D-ribose 1-diphosphate from D-ribose 5-phosphate (route I): step 1/1. Its function is as follows. Involved in the biosynthesis of the central metabolite phospho-alpha-D-ribosyl-1-pyrophosphate (PRPP) via the transfer of pyrophosphoryl group from ATP to 1-hydroxyl of ribose-5-phosphate (Rib-5-P). This chain is Putative ribose-phosphate pyrophosphokinase 2, found in Lactiplantibacillus plantarum (strain ATCC BAA-793 / NCIMB 8826 / WCFS1) (Lactobacillus plantarum).